We begin with the raw amino-acid sequence, 265 residues long: uncharacterized protein (265 aa).

The helical; Signal-anchor for type II membrane protein transmembrane segment at 3-23 (KKTWVYIIIAIIIILLLVWYF) threads the bilayer. N37 and N125 each carry an N-linked (GlcNAc...) asparagine; by host glycan. A coiled-coil region spans residues 37–94 (NQTYNMLQQQISSLNQQILFLKQQISNLHVPAPTSTVNSLRQTVSDINQQVSTINNQI). Residues 158 to 257 (NVADNELNVL…KNSLGSAVRN (100 aa)) are a coiled coil.

The protein localises to the host membrane. Its subcellular location is the virion. This is an uncharacterized protein from Acanthamoeba polyphaga (Amoeba).